Here is a 337-residue protein sequence, read N- to C-terminus: Ferredoxin--NADP reductase (337 aa).

Positions 35, 43, 48, 88, 122, 289, and 330 each coordinate FAD.

This sequence belongs to the ferredoxin--NADP reductase type 2 family. In terms of assembly, homodimer. The cofactor is FAD.

It carries out the reaction 2 reduced [2Fe-2S]-[ferredoxin] + NADP(+) + H(+) = 2 oxidized [2Fe-2S]-[ferredoxin] + NADPH. The sequence is that of Ferredoxin--NADP reductase from Ehrlichia ruminantium (strain Welgevonden).